We begin with the raw amino-acid sequence, 237 residues long: UPF0280 protein Mpal_1292 (237 aa).

The protein belongs to the UPF0280 family.

In Methanosphaerula palustris (strain ATCC BAA-1556 / DSM 19958 / E1-9c), this protein is UPF0280 protein Mpal_1292.